The primary structure comprises 412 residues: Mannose-6-phosphate isomerase (412 aa).

Residues Gln99, His101, Glu126, and His265 each coordinate Zn(2+). Residue Arg284 is part of the active site.

Belongs to the mannose-6-phosphate isomerase type 1 family. The cofactor is Zn(2+).

It localises to the cytoplasm. The protein localises to the nucleus. The catalysed reaction is D-mannose 6-phosphate = D-fructose 6-phosphate. Its pathway is nucleotide-sugar biosynthesis; GDP-alpha-D-mannose biosynthesis; alpha-D-mannose 1-phosphate from D-fructose 6-phosphate: step 1/2. Its function is as follows. Involved in the synthesis of the GDP-mannose and dolichol-phosphate-mannose required for a number of critical mannosyl transfer reactions. This is Mannose-6-phosphate isomerase (pmi40) from Schizosaccharomyces pombe (strain 972 / ATCC 24843) (Fission yeast).